The chain runs to 289 residues: Urease accessory protein UreD (289 aa).

Belongs to the UreD family. As to quaternary structure, ureD, UreF and UreG form a complex that acts as a GTP-hydrolysis-dependent molecular chaperone, activating the urease apoprotein by helping to assemble the nickel containing metallocenter of UreC. The UreE protein probably delivers the nickel.

It is found in the cytoplasm. Functionally, required for maturation of urease via the functional incorporation of the urease nickel metallocenter. The sequence is that of Urease accessory protein UreD from Cupriavidus pinatubonensis (strain JMP 134 / LMG 1197) (Cupriavidus necator (strain JMP 134)).